Here is a 160-residue protein sequence, read N- to C-terminus: Ribosomal RNA large subunit methyltransferase H (160 aa).

S-adenosyl-L-methionine contacts are provided by residues L76, G108, and F127 to W132.

The protein belongs to the RNA methyltransferase RlmH family. In terms of assembly, homodimer.

It localises to the cytoplasm. The catalysed reaction is pseudouridine(1915) in 23S rRNA + S-adenosyl-L-methionine = N(3)-methylpseudouridine(1915) in 23S rRNA + S-adenosyl-L-homocysteine + H(+). Its function is as follows. Specifically methylates the pseudouridine at position 1915 (m3Psi1915) in 23S rRNA. This Mesorhizobium japonicum (strain LMG 29417 / CECT 9101 / MAFF 303099) (Mesorhizobium loti (strain MAFF 303099)) protein is Ribosomal RNA large subunit methyltransferase H.